The sequence spans 1059 residues: Zinc finger protein 658 (1059 aa).

Residues V8–P79 form the KRAB domain. A Glycyl lysine isopeptide (Lys-Gly) (interchain with G-Cter in SUMO2) cross-link involves residue K178. The C2H2-type 1; degenerate zinc finger occupies F325 to Q347. Residues F352–H375 form a C2H2-type 2; degenerate zinc finger. The C2H2-type 3; degenerate zinc finger occupies Y381–H406. Residues Y412–Y434 form a C2H2-type 4; degenerate zinc finger. C2H2-type zinc fingers lie at residues Y440 to H462, Y518 to H540, Y546 to H568, Y574 to H596, Y602 to H624, Y630 to H652, Y658 to H680, Y686 to H708, Y714 to H736, Y742 to H764, Y770 to H792, Y798 to H820, Y826 to H848, and Y854 to H876. The C2H2-type 19; degenerate zinc-finger motif lies at Y882 to R904. 5 consecutive C2H2-type zinc fingers follow at residues Y910–H932, Y938–H960, Y966–H988, Y994–H1016, and Y1022–H1045.

This sequence belongs to the krueppel C2H2-type zinc-finger protein family.

Its subcellular location is the nucleus. Its function is as follows. Mediates transcriptional repression in response to zinc. Represses several genes, including SLC30A5, SLC30A10 and CBWD1, by binding to the zinc transcriptional regulatory element (ZTRE) (5'-C[AC]C[TAG]CC[TC]-N(0-50)-[GA]G[ATC]G[TG]G-3') found in the promoter region. May play a role in the control of ribosome biogenesis, regulating predominantly rRNA levels, as well as those of several ribosomal proteins, thus coordinating this highly zinc-demanding process with the available zinc supply. The chain is Zinc finger protein 658 (ZNF658) from Homo sapiens (Human).